We begin with the raw amino-acid sequence, 415 residues long: Putative serine/threonine-protein phosphatase 4 regulatory subunit 1-like (415 aa).

HEAT repeat units lie at residues 86–124 (VMEI…SNFP), 163–202 (LLPR…TEKF), 203–241 (LIPK…RRTQ), and 242–280 (LFPL…RAGL). A compositionally biased stretch (low complexity) spans 301-318 (FASGSPAPSSGGNTSPAS). The tract at residues 301 to 362 (FASGSPAPSS…GPAESPVESC (62 aa)) is disordered.

May be a regulatory subunit of serine/threonine-protein phosphatase 4. This is Putative serine/threonine-protein phosphatase 4 regulatory subunit 1-like (PPP4R1L) from Homo sapiens (Human).